Reading from the N-terminus, the 206-residue chain is Ribosomal RNA small subunit methyltransferase G (206 aa).

S-adenosyl-L-methionine is bound by residues Gly-71, Phe-76, 122-123, and Arg-135; that span reads AE.

This sequence belongs to the methyltransferase superfamily. RNA methyltransferase RsmG family.

The protein localises to the cytoplasm. Its function is as follows. Specifically methylates the N7 position of a guanine in 16S rRNA. This Bacteroides fragilis (strain ATCC 25285 / DSM 2151 / CCUG 4856 / JCM 11019 / LMG 10263 / NCTC 9343 / Onslow / VPI 2553 / EN-2) protein is Ribosomal RNA small subunit methyltransferase G.